Reading from the N-terminus, the 486-residue chain is Cardiolipin synthase A (486 aa).

2 consecutive transmembrane segments (helical) span residues 3–23 (TFYT…IAGV) and 38–58 (MAWL…YLSF). PLD phosphodiesterase domains follow at residues 219–246 (MDLR…VDPR) and 399–426 (EGGL…DMRS). Active-site residues include H224, K226, D231, H404, K406, and D411.

This sequence belongs to the phospholipase D family. Cardiolipin synthase subfamily. ClsA sub-subfamily.

The protein resides in the cell inner membrane. The catalysed reaction is 2 a 1,2-diacyl-sn-glycero-3-phospho-(1'-sn-glycerol) = a cardiolipin + glycerol. Its function is as follows. Catalyzes the reversible phosphatidyl group transfer from one phosphatidylglycerol molecule to another to form cardiolipin (CL) (diphosphatidylglycerol) and glycerol. This is Cardiolipin synthase A from Escherichia fergusonii (strain ATCC 35469 / DSM 13698 / CCUG 18766 / IAM 14443 / JCM 21226 / LMG 7866 / NBRC 102419 / NCTC 12128 / CDC 0568-73).